We begin with the raw amino-acid sequence, 419 residues long: Phospholipase A1-IIgamma (419 aa).

2 coiled-coil regions span residues 1 to 21 (MKRK…EFAK) and 207 to 227 (NARD…KDEE). Serine 236 functions as the Acyl-ester intermediate in the catalytic mechanism. Catalysis depends on charge relay system residues serine 236, aspartate 302, and histidine 339.

This sequence belongs to the AB hydrolase superfamily. Lipase family. Expressed in seedlings, stems and siliques, and, to a lower extent, in flowers.

Its subcellular location is the cytoplasm. Acylhydrolase that catalyzes the hydrolysis of 1,3-diacylglycerol (1,3-DAG) and 1-monoacylglycerol (1-MAG) at the sn-1 position. High activity toward 1,3-DAG and 1-MAG, but low activity toward 1,2-diacylglycerol (1,2-DAG) and 1-lysophosphatidylcholine (1-LPC), and no activity toward phosphatidylcholine (PC), monogalactosyldiacylglycerol (MGDG), digalactosyldiacylglycerol (DGDG), triacylglycerol (TAG) and 2-monoacylglycerol (2-MAG). May be involved in the negative regulation of seedling establishment by inhibiting the breakdown, beta-oxidation and mobilization of seed storage oils. This Arabidopsis thaliana (Mouse-ear cress) protein is Phospholipase A1-IIgamma (DSEL).